Reading from the N-terminus, the 266-residue chain is Small ribosomal subunit protein uS3 (266 aa).

The KH type-2 domain maps to 39-107 (VREYLKKKLK…PVHVNIEEIR (69 aa)). A disordered region spans residues 214 to 266 (PVVEEVTEDKRPRRNARPGDRRPRRDGEGGAPGARRGGPRRGAGKPEDGKTGE). 2 stretches are compositionally biased toward basic and acidic residues: residues 230–241 (RPGDRRPRRDGE) and 257–266 (GKPEDGKTGE).

Belongs to the universal ribosomal protein uS3 family. Part of the 30S ribosomal subunit. Forms a tight complex with proteins S10 and S14.

In terms of biological role, binds the lower part of the 30S subunit head. Binds mRNA in the 70S ribosome, positioning it for translation. The sequence is that of Small ribosomal subunit protein uS3 from Burkholderia mallei (strain NCTC 10247).